A 315-amino-acid chain; its full sequence is MKFKHTSVLLHETIDNLKPKNDGLYVDATFGGGGHAKYLLSKIDTGTLIGFDQDEYAIKSAELNFANLLKPDSEPKLQLVHDNFSNLEENLVKLGYTDGIDGIYYDLGVSSPQFDQADRGFSYRYNARLDMRMNQDQDLDAYQLVNTLSQKELADILYQYGDEKFSRQIAHKIVEKRKEKPIVTTFELVDIIKDAIPAYARRTGGHPAKKSFQALRVAVNHELDVLQASLEEAIKVLRPGGRISVITFQSHEDKIVKKIFKKYSEVEVPRGMPFIPDDMKPTLKLVNRKPIVASDSELENNNRSHSAKLRVAEKL.

S-adenosyl-L-methionine-binding positions include 33–35 (GGH), aspartate 52, phenylalanine 84, aspartate 106, and glutamine 113.

This sequence belongs to the methyltransferase superfamily. RsmH family.

The protein localises to the cytoplasm. It catalyses the reaction cytidine(1402) in 16S rRNA + S-adenosyl-L-methionine = N(4)-methylcytidine(1402) in 16S rRNA + S-adenosyl-L-homocysteine + H(+). In terms of biological role, specifically methylates the N4 position of cytidine in position 1402 (C1402) of 16S rRNA. The protein is Ribosomal RNA small subunit methyltransferase H of Lactobacillus acidophilus (strain ATCC 700396 / NCK56 / N2 / NCFM).